A 481-amino-acid polypeptide reads, in one-letter code: Cytochrome c oxidase subunit 1 (481 aa).

The chain crosses the membrane as a helical span at residues 22 to 42 (ISYLWLAYWFGMIGFYMSVLI). The Ca(2+) site is built by E45 and G50. Transmembrane regions (helical) follow at residues 64–84 (LLFTLHGLIMVFFNIMTGLFG), 109–129 (SLLFQPIGFVLVVSSIYLEIG), 151–171 (FIIFGLLAAGIASTLSSVNFI), 194–214 (IVLTSFLLLLSLPVVTAVFLM), 240–260 (LFWFFGHPEVYIMILPGFGII), 278–298 (MILAMGFNSFVRLFGLGTSYV), 309–329 (YFTTVTILIALPTGNKIFNWV), and 343–363 (LVLFTVLFIVNFVIGGTTGVV). H69 lines the Fe(II)-heme a pocket. H246 contacts Cu cation. A cross-link (1'-histidyl-3'-tyrosine (His-Tyr)) is located at residues 246–250 (HPEVY). Y250 contributes to the O2 binding site. Mg(2+) is bound by residues H374 and D375. H382 lines the heme a3 pocket. 2 helical membrane-spanning segments follow: residues 382–402 (HFHFVLSIGAIISMICFIIYI) and 420–440 (IAPIFMISVLLTFLPMHFTGF). A Fe(II)-heme a-binding site is contributed by H384. P448 serves as a coordination point for Ca(2+). The helical transmembrane segment at 459 to 479 (FICTLGATMMLVLKLAILFII) threads the bilayer.

This sequence belongs to the heme-copper respiratory oxidase family. As to quaternary structure, component of the cytochrome c oxidase (complex IV, CIV), a multisubunit enzyme composed of a catalytic core of 3 subunits and several supernumerary subunits. The complex exists as a monomer or a dimer and forms supercomplexes (SCs) in the inner mitochondrial membrane with ubiquinol-cytochrome c oxidoreductase (cytochrome b-c1 complex, complex III, CIII). The cofactor is heme. Cu cation serves as cofactor.

The protein localises to the mitochondrion inner membrane. It carries out the reaction 4 Fe(II)-[cytochrome c] + O2 + 8 H(+)(in) = 4 Fe(III)-[cytochrome c] + 2 H2O + 4 H(+)(out). Its pathway is energy metabolism; oxidative phosphorylation. Component of the cytochrome c oxidase, the last enzyme in the mitochondrial electron transport chain which drives oxidative phosphorylation. The respiratory chain contains 3 multisubunit complexes succinate dehydrogenase (complex II, CII), ubiquinol-cytochrome c oxidoreductase (cytochrome b-c1 complex, complex III, CIII) and cytochrome c oxidase (complex IV, CIV), that cooperate to transfer electrons derived from NADH and succinate to molecular oxygen, creating an electrochemical gradient over the inner membrane that drives transmembrane transport and the ATP synthase. Cytochrome c oxidase is the component of the respiratory chain that catalyzes the reduction of oxygen to water. Electrons originating from reduced cytochrome c in the intermembrane space (IMS) are transferred via the dinuclear copper A center (CU(A)) of subunit 2 and heme A of subunit 1 to the active site in subunit 1, a binuclear center (BNC) formed by heme A3 and copper B (CU(B)). The BNC reduces molecular oxygen to 2 water molecules using 4 electrons from cytochrome c in the IMS and 4 protons from the mitochondrial matrix. In Theileria parva (East coast fever infection agent), this protein is Cytochrome c oxidase subunit 1 (MT-CO1).